The following is a 311-amino-acid chain: Olfactory receptor 4K1 (311 aa).

Residues 1-25 (MAHTNESMVSEFVLLGLSNSWGLQL) are Extracellular-facing. N-linked (GlcNAc...) asparagine glycosylation occurs at N5. A helical membrane pass occupies residues 26-49 (FFFAIFSIVYVTSVLGNVLIIVII). Topologically, residues 50–57 (SFDSHLNS) are cytoplasmic. The helical transmembrane segment at 58–79 (PMYFLLSNLSFIDICQSNFATP) threads the bilayer. At 80–100 (KMLVDFFIERKTISFEGCMAQ) the chain is on the extracellular side. C97 and C189 are oxidised to a cystine. A helical transmembrane segment spans residues 101–120 (IFVLHSFVGSEMMLLVAMAY). Residues 121–139 (DRFIAICKPLHYSTIMNRR) are Cytoplasmic-facing. A helical membrane pass occupies residues 140 to 158 (LCVIFVSISWAVGVLHSVS). Residues 159 to 195 (HLAFTVDLPFCGPNEVDSFFCDLPLVIELACMDTYEM) are Extracellular-facing. A helical membrane pass occupies residues 196–219 (EIMTLTNSGLISLSCFLALIISYT). Residues 220–235 (IILIGVRCRSSSGSSK) are Cytoplasmic-facing. The chain crosses the membrane as a helical span at residues 236 to 258 (ALSTLTAHITVVILFFGPCIYFY). At 259-269 (IWPFSRLPVDK) the chain is on the extracellular side. Residues 270–289 (FLSVFYTVCTPLLNPIIYSL) traverse the membrane as a helical segment. Over 290 to 311 (RNEDVKAAMWKLRNRHVNSWKN) the chain is Cytoplasmic.

It belongs to the G-protein coupled receptor 1 family.

Its subcellular location is the cell membrane. Odorant receptor. The polypeptide is Olfactory receptor 4K1 (OR4K1) (Homo sapiens (Human)).